Reading from the N-terminus, the 831-residue chain is Thymine dioxygenase JBP1-B (831 aa).

A thymine dioxygenase region spans residues 80-282; sequence VVGGVLLPGA…RLTCVCYYRA (203 aa). Residues His-207, Asp-209, and His-257 each coordinate Fe cation. 2-oxoglutarate is bound at residue Arg-273. Residues 409–578 form a DNA-binding JBP1 domain region; that stretch reads LGGALKAAEE…IEEARRRGNA (170 aa).

It belongs to the TET family. JBP1 subfamily. As to quaternary structure, monomer. Binds to DNA as a monomer. It depends on Fe(2+) as a cofactor.

The protein resides in the nucleus. It carries out the reaction thymine + 2-oxoglutarate + O2 = 5-hydroxymethyluracil + succinate + CO2. In terms of biological role, dioxygenase that catalyzes the first step of DNA base J (beta-d-glucosyl-HOMedU) biosynthesis by converting thymine to 5-hydroxymethyluracil (HOMedU). DNA base J is a hypermodified thymidine residue found in the genome of kinetoplastid parasites, which is localized primarily to repetitive DNA, namely the telomeres, and is implicated in the regulation of antigenic variation. Also specifically binds to base J-containing DNA (J-DNA). Involved in propagation and maintenance of DNA base J synthesis initiated by JBP2 by specifically binding already synthesized DNA base J and propagating J synthesis. Thymine dioxygenase activity and J-DNA-binding are independent functions. This Trypanosoma cruzi (strain CL Brener) protein is Thymine dioxygenase JBP1-B (JBP1B).